Here is a 144-residue protein sequence, read N- to C-terminus: Protein archease (144 aa).

Ca(2+)-binding residues include D14, D143, and I144.

The protein belongs to the archease family.

Functionally, activates the tRNA-splicing ligase complex by facilitating the enzymatic turnover of catalytic subunit RtcB. Acts by promoting the guanylylation of RtcB, a key intermediate step in tRNA ligation. Can also alter the NTP specificity of RtcB such that ATP, dGTP or ITP is used efficiently. In Aeropyrum pernix (strain ATCC 700893 / DSM 11879 / JCM 9820 / NBRC 100138 / K1), this protein is Protein archease.